The chain runs to 374 residues: Homoserine O-succinyltransferase (374 aa).

The AB hydrolase-1 domain occupies 47–357; that stretch reads NAILVCHALS…NFGHDSFLME (311 aa). S153 acts as the Nucleophile in catalysis. R223 is a binding site for substrate. Residues D318 and H351 contribute to the active site. Residue D352 coordinates substrate.

Belongs to the AB hydrolase superfamily. MetX family. As to quaternary structure, homodimer.

It localises to the cytoplasm. The catalysed reaction is L-homoserine + succinyl-CoA = O-succinyl-L-homoserine + CoA. It functions in the pathway amino-acid biosynthesis; L-methionine biosynthesis via de novo pathway; O-succinyl-L-homoserine from L-homoserine: step 1/1. Transfers a succinyl group from succinyl-CoA to L-homoserine, forming succinyl-L-homoserine. The protein is Homoserine O-succinyltransferase of Dechloromonas aromatica (strain RCB).